The primary structure comprises 209 residues: Type III pantothenate kinase (209 aa).

Residue Asp-5–Asn-12 participates in ATP binding. Substrate is bound by residues Tyr-68 and Gly-72–Arg-75. The active-site Proton acceptor is Asp-74. Position 89 (Asp-89) interacts with K(+). Residue Ser-92 coordinates ATP. Thr-144 contributes to the substrate binding site.

The protein belongs to the type III pantothenate kinase family. Homodimer. Requires NH4(+) as cofactor. K(+) is required as a cofactor.

Its subcellular location is the cytoplasm. The catalysed reaction is (R)-pantothenate + ATP = (R)-4'-phosphopantothenate + ADP + H(+). Its pathway is cofactor biosynthesis; coenzyme A biosynthesis; CoA from (R)-pantothenate: step 1/5. In terms of biological role, catalyzes the phosphorylation of pantothenate (Pan), the first step in CoA biosynthesis. The protein is Type III pantothenate kinase of Campylobacter jejuni (strain RM1221).